The sequence spans 188 residues: Large ribosomal subunit protein bL35m (188 aa).

It belongs to the bacterial ribosomal protein bL35 family.

The protein resides in the mitochondrion. The sequence is that of Large ribosomal subunit protein bL35m (Mrpl35) from Mus musculus (Mouse).